Consider the following 120-residue polypeptide: NAD(P)H-quinone oxidoreductase subunit 3 (120 aa).

The next 3 membrane-spanning stretches (helical) occupy residues 6-26, 64-84, and 89-109; these read GYDA…LALV, MFAL…PWAV, and LGLL…VALA.

Belongs to the complex I subunit 3 family. As to quaternary structure, NDH-1 can be composed of about 15 different subunits; different subcomplexes with different compositions have been identified which probably have different functions.

The protein resides in the cellular thylakoid membrane. It catalyses the reaction a plastoquinone + NADH + (n+1) H(+)(in) = a plastoquinol + NAD(+) + n H(+)(out). The catalysed reaction is a plastoquinone + NADPH + (n+1) H(+)(in) = a plastoquinol + NADP(+) + n H(+)(out). In terms of biological role, NDH-1 shuttles electrons from an unknown electron donor, via FMN and iron-sulfur (Fe-S) centers, to quinones in the respiratory and/or the photosynthetic chain. The immediate electron acceptor for the enzyme in this species is believed to be plastoquinone. Couples the redox reaction to proton translocation, and thus conserves the redox energy in a proton gradient. Cyanobacterial NDH-1 also plays a role in inorganic carbon-concentration. This Synechococcus sp. (strain CC9902) protein is NAD(P)H-quinone oxidoreductase subunit 3.